We begin with the raw amino-acid sequence, 366 residues long: Geranylgeranyl pyrophosphate synthase, chloroplastic/chromoplastic (366 aa).

Residues 44 to 65 (KRTVSSSSSSSLITKEDNNLKS) are disordered. Isopentenyl diphosphate-binding residues include lysine 112, arginine 115, and histidine 144. Mg(2+) contacts are provided by aspartate 151 and aspartate 157. A dimethylallyl diphosphate-binding site is contributed by arginine 162. Arginine 163 serves as a coordination point for isopentenyl diphosphate. Dimethylallyl diphosphate is bound by residues lysine 251, threonine 252, glutamine 289, lysine 306, and lysine 316.

This sequence belongs to the FPP/GGPP synthase family. In terms of assembly, dimer. Requires Mg(2+) as cofactor.

It localises to the plastid. The protein localises to the chloroplast stroma. It is found in the chromoplast. It carries out the reaction isopentenyl diphosphate + dimethylallyl diphosphate = (2E)-geranyl diphosphate + diphosphate. It catalyses the reaction isopentenyl diphosphate + (2E)-geranyl diphosphate = (2E,6E)-farnesyl diphosphate + diphosphate. The enzyme catalyses isopentenyl diphosphate + (2E,6E)-farnesyl diphosphate = (2E,6E,10E)-geranylgeranyl diphosphate + diphosphate. It participates in isoprenoid biosynthesis; farnesyl diphosphate biosynthesis; farnesyl diphosphate from geranyl diphosphate and isopentenyl diphosphate: step 1/1. It functions in the pathway isoprenoid biosynthesis; geranyl diphosphate biosynthesis; geranyl diphosphate from dimethylallyl diphosphate and isopentenyl diphosphate: step 1/1. Its pathway is isoprenoid biosynthesis; geranylgeranyl diphosphate biosynthesis; geranylgeranyl diphosphate from farnesyl diphosphate and isopentenyl diphosphate: step 1/1. Functionally, catalyzes the trans-addition of the three molecules of IPP onto DMAPP to form geranylgeranyl pyrophosphate. This is Geranylgeranyl pyrophosphate synthase, chloroplastic/chromoplastic (GGPS1) from Sinapis alba (White mustard).